The primary structure comprises 377 residues: ATP synthase gamma chain, chloroplastic (377 aa).

A chloroplast-targeting transit peptide spans 1 to 55; it reads MSCSNLTMLVSSKPSLSDSSALSFRSSVSPFQLPNHNTSGPSNPSRSSSVTPVHC. A disordered region spans residues 30–52; the sequence is PFQLPNHNTSGPSNPSRSSSVTP. Over residues 37 to 52 the composition is skewed to low complexity; it reads NTSGPSNPSRSSSVTP. Residue Cys-143 is part of the active site. A disulfide bridge links Cys-253 with Cys-259.

The protein belongs to the ATPase gamma chain family. As to quaternary structure, F-type ATPases have 2 components, CF(1) - the catalytic core - and CF(0) - the membrane proton channel. CF(1) has five subunits: alpha(3), beta(3), gamma(1), delta(1), epsilon(1). CF(0) has four main subunits: a, b, b' and c.

It localises to the plastid. Its subcellular location is the chloroplast thylakoid membrane. Its function is as follows. Produces ATP from ADP in the presence of a proton gradient across the membrane. The gamma chain is believed to be important in regulating ATPase activity and the flow of protons through the CF(0) complex. The chain is ATP synthase gamma chain, chloroplastic (ATPC) from Nicotiana tabacum (Common tobacco).